The primary structure comprises 388 residues: (S)-8-oxocitronellyl enol synthase ISY1 (388 aa).

NADP(+)-binding positions include 35-37 (TGI), 63-64 (RR), 81-82 (DV), 105-106 (TW), and Gln-143. Active-site residues include Lys-147 and Tyr-178. Residues Tyr-178, Ile-205, and 212 to 214 (SMM) contribute to the NADP(+) site.

The protein belongs to the short-chain dehydrogenases/reductases (SDR) family.

It catalyses the reaction (S)-8-oxocitronellyl enol + NADP(+) = (6E)-8-oxogeranial + NADPH + H(+). The catalysed reaction is (S)-8-oxocitronellyl enol + NAD(+) = (6E)-8-oxogeranial + NADH + H(+). Functionally, iridoid synthase that catalyzes the first step in generation of the iridoid ring scaffold using the linear monoterpene (6E)-8-oxogeranial as substrate. Iridoids comprise a large family of distinctive bicyclic monoterpenes that possess a wide range of pharmacological activities, including anticancer, anti-inflammatory, antifungal and antibacterial activities. Catalyzes the conversion of the linear monoterpene (6E)-8-oxogeranial to (S)-8-oxocitronellyl enol, a precursor of nepetalactones, which are metabolites that are both insect-repellent and have euphoric effect in cats. The polypeptide is (S)-8-oxocitronellyl enol synthase ISY1 (Nepeta cataria (Catnip)).